Reading from the N-terminus, the 268-residue chain is Ribosomal RNA small subunit methyltransferase A (268 aa).

Residues asparagine 12, leucine 14, glycine 38, glutamate 59, aspartate 82, and asparagine 107 each contribute to the S-adenosyl-L-methionine site.

Belongs to the class I-like SAM-binding methyltransferase superfamily. rRNA adenine N(6)-methyltransferase family. RsmA subfamily.

The protein localises to the cytoplasm. It carries out the reaction adenosine(1518)/adenosine(1519) in 16S rRNA + 4 S-adenosyl-L-methionine = N(6)-dimethyladenosine(1518)/N(6)-dimethyladenosine(1519) in 16S rRNA + 4 S-adenosyl-L-homocysteine + 4 H(+). Specifically dimethylates two adjacent adenosines (A1518 and A1519) in the loop of a conserved hairpin near the 3'-end of 16S rRNA in the 30S particle. May play a critical role in biogenesis of 30S subunits. The sequence is that of Ribosomal RNA small subunit methyltransferase A from Onion yellows phytoplasma (strain OY-M).